A 1028-amino-acid chain; its full sequence is RNA cytidine acetyltransferase 2 (1028 aa).

ATP-binding positions include 286–295 (GRGKSAALGL) and Arg-458. In terms of domain architecture, N-acetyltransferase spans 546 to 729 (VLLGPVDESQ…FAPFYVSQIP (184 aa)). Residues 617-619 (IAV), 624-630 (MKMGYGS), and Lys-717 each bind acetyl-CoA. The segment at 982–1028 (SGIISVKSTKSENENGFDKSTKKRSSDKRSSSSSKSKSSKKRKSLKE) is disordered. Residues 990–1001 (TKSENENGFDKS) are compositionally biased toward basic and acidic residues. Positions 1018-1028 (KSSKKRKSLKE) are enriched in basic residues.

It belongs to the RNA cytidine acetyltransferase family. NAT10 subfamily.

It localises to the nucleus. Its subcellular location is the nucleolus. It catalyses the reaction a cytidine in 18S rRNA + acetyl-CoA + ATP + H2O = an N(4)-acetylcytidine in 18S rRNA + ADP + phosphate + CoA + H(+). The enzyme catalyses a cytidine in tRNA + acetyl-CoA + ATP + H2O = an N(4)-acetylcytidine in tRNA + ADP + phosphate + CoA + H(+). Functionally, RNA cytidine acetyltransferase with specificity toward both 18S rRNA and tRNAs. Catalyzes the formation of N(4)-acetylcytidine (ac4C) in 18S rRNA. Required for early nucleolar cleavages of precursor rRNA at sites A0, A1 and A2 during 18S rRNA synthesis. Catalyzes the formation of ac4C in serine and leucine tRNAs. Requires a tRNA-binding adapter protein for full tRNA acetyltransferase activity but not for 18S rRNA acetylation. This chain is RNA cytidine acetyltransferase 2, found in Arabidopsis thaliana (Mouse-ear cress).